Consider the following 418-residue polypeptide: Serine hydroxymethyltransferase (418 aa).

(6S)-5,6,7,8-tetrahydrofolate is bound by residues Leu121 and 125 to 127 (GHL). Position 230 is an N6-(pyridoxal phosphate)lysine (Lys230). Residues Glu246 and 355–357 (SPF) contribute to the (6S)-5,6,7,8-tetrahydrofolate site.

The protein belongs to the SHMT family. As to quaternary structure, homodimer. The cofactor is pyridoxal 5'-phosphate.

It is found in the cytoplasm. The catalysed reaction is (6R)-5,10-methylene-5,6,7,8-tetrahydrofolate + glycine + H2O = (6S)-5,6,7,8-tetrahydrofolate + L-serine. It functions in the pathway one-carbon metabolism; tetrahydrofolate interconversion. The protein operates within amino-acid biosynthesis; glycine biosynthesis; glycine from L-serine: step 1/1. Catalyzes the reversible interconversion of serine and glycine with tetrahydrofolate (THF) serving as the one-carbon carrier. This reaction serves as the major source of one-carbon groups required for the biosynthesis of purines, thymidylate, methionine, and other important biomolecules. Also exhibits THF-independent aldolase activity toward beta-hydroxyamino acids, producing glycine and aldehydes, via a retro-aldol mechanism. The chain is Serine hydroxymethyltransferase from Streptococcus pneumoniae serotype 2 (strain D39 / NCTC 7466).